The following is a 591-amino-acid chain: DEAD-box ATP-dependent RNA helicase 17 (591 aa).

Positions C23–A52 match the Q motif motif. Residues I55–I248 form the Helicase ATP-binding domain. A68–T75 serves as a coordination point for ATP. Positions D181–D184 match the DEAD box motif. A Helicase C-terminal domain is found at Q293–H482. Positions G562–R591 are disordered. Residues Q568–R591 are compositionally biased toward basic residues.

The protein belongs to the DEAD box helicase family. DDX31/DBP7 subfamily. As to expression, expressed in flowers and pollen grains.

The protein localises to the nucleus. The catalysed reaction is ATP + H2O = ADP + phosphate + H(+). Its function is as follows. May play a role in organellar ribosome biogenesis and suppress 16S rRNA maturation. The polypeptide is DEAD-box ATP-dependent RNA helicase 17 (Oryza sativa subsp. japonica (Rice)).